A 221-amino-acid chain; its full sequence is uncharacterized protein (221 aa).

The span at Met-1–Ala-11 shows a compositional bias: basic residues. 2 disordered regions span residues Met-1–Cys-23 and Ser-139–Glu-169. Composition is skewed to basic and acidic residues over residues Arg-13–Cys-23 and Asp-155–Pro-168.

This is an uncharacterized protein from Homo sapiens (Human).